The sequence spans 264 residues: Thymidylate synthase (264 aa).

Residue Arg21 coordinates dUMP. His51 provides a ligand contact to (6R)-5,10-methylene-5,6,7,8-tetrahydrofolate. 126 to 127 (RR) is a binding site for dUMP. Catalysis depends on Cys146, which acts as the Nucleophile. Residues 166–169 (RSAD), Asn177, and 207–209 (HLY) each bind dUMP. Residue Asp169 participates in (6R)-5,10-methylene-5,6,7,8-tetrahydrofolate binding. Ser263 contacts (6R)-5,10-methylene-5,6,7,8-tetrahydrofolate.

Belongs to the thymidylate synthase family. Bacterial-type ThyA subfamily. As to quaternary structure, homodimer.

The protein localises to the cytoplasm. The enzyme catalyses dUMP + (6R)-5,10-methylene-5,6,7,8-tetrahydrofolate = 7,8-dihydrofolate + dTMP. It participates in pyrimidine metabolism; dTTP biosynthesis. In terms of biological role, catalyzes the reductive methylation of 2'-deoxyuridine-5'-monophosphate (dUMP) to 2'-deoxythymidine-5'-monophosphate (dTMP) while utilizing 5,10-methylenetetrahydrofolate (mTHF) as the methyl donor and reductant in the reaction, yielding dihydrofolate (DHF) as a by-product. This enzymatic reaction provides an intracellular de novo source of dTMP, an essential precursor for DNA biosynthesis. The polypeptide is Thymidylate synthase (Laribacter hongkongensis (strain HLHK9)).